The sequence spans 1690 residues: Collagen alpha-4(IV) chain (1690 aa).

The N-terminal stretch at 1 to 38 (MWSLHIVLMRCSFRLTKSLATGPWSLILILFSVQYVYG) is a signal peptide. The 7S domain stretch occupies residues 39–64 (SGKKYIGPCGGRDCSVCHCVPEKGSR). Disordered stretches follow at residues 61–173 (KGSR…GEKG) and 187–258 (GDRG…GPTL). The segment at 65-1459 (GPPGPPGPQG…IGDPGPKGFG (1395 aa)) is triple-helical region. The span at 66-75 (PPGPPGPQGP) shows a compositional bias: pro residues. The span at 76 to 88 (IGPLGAPGPIGLS) shows a compositional bias: low complexity. Residues 94-96 (RGD) carry the Cell attachment site motif. Residue Asn142 is glycosylated (N-linked (GlcNAc...) asparagine). Residues 145–147 (RGD) carry the Cell attachment site motif. Gly residues predominate over residues 149–164 (GFPGGRGALGPGGPLG). A Cell attachment site motif is present at residues 189 to 191 (RGD). Over residues 199–208 (GSWGAGGPAG) the composition is skewed to gly residues. The Cell attachment site motif lies at 310–312 (RGD). Disordered stretches follow at residues 369-390 (PGDPGFPGRYGETGDVGPPGPP), 405-451 (GPPG…GLQG), and 469-1457 (GIKG…GPKG). Residues 412–434 (FPGLPGLPGEAGIPGRPDSAPGK) show a composition bias toward low complexity. Composition is skewed to pro residues over residues 498-507 (PMGPPGPPGL) and 529-540 (PGPPGAEGPPGL). Residues 586-607 (HGRDGHAGEKGDPGPPGDHEDA) show a composition bias toward basic and acidic residues. Positions 644-655 (PGVPGHPGVRGP) are enriched in low complexity. An N-linked (GlcNAc...) asparagine glycan is attached at Asn669. Residues 681-690 (FDGPPGPKGF) are compositionally biased toward pro residues. Short sequence motifs (cell attachment site) lie at residues 724–726 (RGD) and 785–787 (RGD). Positions 849–858 (GAPGGKGQPG) are enriched in gly residues. Composition is skewed to low complexity over residues 866–880 (AGMKGLPGLPGRPGA) and 907–917 (PRGLPGFPGFP). A Cell attachment site motif is present at residues 989 to 991 (RGD). The span at 1023–1032 (PGPPGPPGPP) shows a compositional bias: pro residues. The span at 1108–1117 (PGIQGPRGSP) shows a compositional bias: low complexity. The segment covering 1119-1131 (RPGPPGSSGPPGC) has biased composition (pro residues). The Cell attachment site signature appears at 1212 to 1214 (RGD). Composition is skewed to pro residues over residues 1220–1243 (ISPPGPRGKKGPPGPPGSSGPPGP), 1256–1280 (DPGPPGDQGPPGPDGPRGAPGPPGL), 1297–1309 (PGPPGPPGPPGPP), 1338–1353 (FPGPPGEKGLPGPPGR), and 1443–1452 (GPGPPGPIGD). A Collagen IV NC1 domain is found at 1465–1690 (GFLLVLHSQT…SRCQVCVKYS (226 aa)). Disulfide bonds link Cys1480–Cys1569, Cys1513–Cys1566, Cys1525–Cys1531, Cys1588–Cys1686, Cys1622–Cys1683, and Cys1634–Cys1641.

Belongs to the type IV collagen family. There are six type IV collagen isoforms, alpha 1(IV)-alpha 6(IV), each of which can form a triple helix structure with 2 other chains to generate type IV collagen network. The alpha 3(IV) chain forms a triple helical protomer with alpha 4(IV) and alpha 5(IV); this triple helical structure dimerizes through NC1-NC1 domain interactions such that the alpha 3(IV), alpha 4(IV) and alpha 5(IV) chains of one protomer connect with the alpha 5(IV), alpha 4(IV) and alpha 3(IV) chains of the opposite protomer, respectively. Associates with LAMB2 at the neuromuscular junction and in GBM. In terms of processing, prolines at the third position of the tripeptide repeating unit (G-X-Y) are hydroxylated in some or all of the chains. Post-translationally, type IV collagens contain numerous cysteine residues which are involved in inter- and intramolecular disulfide bonding. 12 of these, located in the NC1 domain, are conserved in all known type IV collagens. The trimeric structure of the NC1 domains is stabilized by covalent bonds between Lys and Met residues. As to expression, expressed in Bruch's membrane, outer plexiform layer, inner nuclear layer, inner plexiform layer, ganglion cell layer, inner limiting membrane and around the blood vessels of the retina (at protein level). Alpha 3 and alpha 4 type IV collagens are colocalized and present in kidney, eye, basement membranes of lens capsule, cochlea, lung, skeletal muscle, aorta, synaptic fibers, fetal kidney and fetal lung. PubMed:8083201 reports similar levels of expression of alpha 3 and alpha 4 type IV collagens in kidney, but PubMed:7523402 reports that in kidney levels of alpha 3 type IV collagen are significantly lower than those of alpha 4 type IV collagen. Highest levels of expression of alpha 4 type IV collagen are detected in kidney, calvaria, neuroretina and cardiac muscle. Lower levels of expression are observed in brain, lung and thymus, and no expression is detected in choroid plexus, liver, adrenal, pancreas, ileum or skin.

It is found in the secreted. The protein resides in the extracellular space. It localises to the extracellular matrix. The protein localises to the basement membrane. Functionally, type IV collagen is the major structural component of glomerular basement membranes (GBM), forming a 'chicken-wire' meshwork together with laminins, proteoglycans and entactin/nidogen. The protein is Collagen alpha-4(IV) chain (COL4A4) of Homo sapiens (Human).